Reading from the N-terminus, the 117-residue chain is Ribosome-binding factor A (117 aa).

This sequence belongs to the RbfA family. Monomer. Binds 30S ribosomal subunits, but not 50S ribosomal subunits or 70S ribosomes.

It localises to the cytoplasm. In terms of biological role, one of several proteins that assist in the late maturation steps of the functional core of the 30S ribosomal subunit. Associates with free 30S ribosomal subunits (but not with 30S subunits that are part of 70S ribosomes or polysomes). Required for efficient processing of 16S rRNA. May interact with the 5'-terminal helix region of 16S rRNA. The polypeptide is Ribosome-binding factor A (Leptospira interrogans serogroup Icterohaemorrhagiae serovar copenhageni (strain Fiocruz L1-130)).